The following is a 611-amino-acid chain: Pescadillo homolog (611 aa).

Positions 310–335 (VQMGDPDEASPGEEEQFVAHASKSAP) are disordered. Over residues 314–325 (DPDEASPGEEEQ) the composition is skewed to acidic residues. The BRCT domain maps to 354–455 (PSSRLFAPYT…KILLEDTYAQ (102 aa)). 2 disordered regions span residues 469–506 (YEGAYDPTAATNDADMDVETDGEEGEADASGDEKESNT) and 545–611 (VKKA…AGGK). The segment covering 482-498 (ADMDVETDGEEGEADAS) has biased composition (acidic residues). 2 stretches are compositionally biased toward basic and acidic residues: residues 552–569 (KKPDTASKATEEAEKDMN) and 579–602 (KLYEKMKYSQQKKAAEKEKLEQRK). Residues 580–609 (LYEKMKYSQQKKAAEKEKLEQRKKQLQKAG) are a coiled coil.

Belongs to the pescadillo family. Component of the NOP7 complex, composed of ERB1, NOP7 and YTM1. The complex is held together by ERB1, which interacts with NOP7 via its N-terminal domain and with YTM1 via a high-affinity interaction between the seven-bladed beta-propeller domains of the 2 proteins. The NOP7 complex associates with the 66S pre-ribosome.

The protein localises to the nucleus. Its subcellular location is the nucleolus. The protein resides in the nucleoplasm. Component of the NOP7 complex, which is required for maturation of the 25S and 5.8S ribosomal RNAs and formation of the 60S ribosome. This chain is Pescadillo homolog, found in Coprinopsis cinerea (strain Okayama-7 / 130 / ATCC MYA-4618 / FGSC 9003) (Inky cap fungus).